Here is a 186-residue protein sequence, read N- to C-terminus: M-phase phosphoprotein 6 homolog (186 aa).

N-acetylserine is present on S2. Disordered stretches follow at residues K22 to I47 and S95 to K186. Residues S32–S42 show a composition bias toward low complexity. Residue S42 is modified to Phosphoserine. A compositionally biased stretch (basic and acidic residues) spans S122–F147. The residue at position 150 (S150) is a Phosphoserine. The span at I168–K186 shows a compositional bias: basic residues.

The protein belongs to the MPP6 family. In terms of assembly, associates with the RNA exosome complex.

Its subcellular location is the nucleus. In terms of biological role, RNA-binding protein that associates with the RNA exosome complex. Involved in surveillance of pre-rRNAs and pre-mRNAs, and the degradation of cryptic non-coding RNAs (ncRNA) derived from intergenic regions and the ribosomal DNA spacer heterochromatin. The polypeptide is M-phase phosphoprotein 6 homolog (MPP6) (Saccharomyces cerevisiae (strain ATCC 204508 / S288c) (Baker's yeast)).